The following is a 329-amino-acid chain: MSNSMLDKNKAILTGGGALLLGLIVLFYLAYRPKAEVLQGFLEAREYSVSSKVPGRIEKVFVKKGDRIKKGDLVFSISSPELEAKLAQAEAGHKAAKAVSDEVKRGSRDETINSARDVWQAAKSQANLAKETYKRVQDLYDNGVASLQKRDEAYAAYESTKYNESAAYQKYKMALGGASSESKIAAKAKESAALGQVNEVESYLKDVKALAPIDGEVSNVLLSGGELSPKGFPVVLMIDLKDSWLKISVPEKYLNEFKVGKEFEGYIPALKRSAKFRVKYLSVMGDFATWKATNNSNTYDMKSYEVEAIPLEELENFRVGMSVLVTIKP.

Residues 11 to 31 form a helical membrane-spanning segment; the sequence is AILTGGGALLLGLIVLFYLAY.

This sequence belongs to the membrane fusion protein (MFP) (TC 8.A.1) family.

It localises to the membrane. This is 36 kDa antigen from Helicobacter pylori (strain J99 / ATCC 700824) (Campylobacter pylori J99).